Here is a 176-residue protein sequence, read N- to C-terminus: MIQTLVLRDTPRLESCRRGGFAMKFSTRCLRLVLCASAVALSAQDASDTAGRVLEPPPPGLTESNSSRMYYVNLPVVKVFSHRLGYRVIYRRANFEMAEIYLPSAWFSPRVGKALLRHAPVRVDPYLSFFMEGNTLTYVKLTLPRSLSSPVWGTLKSPSEYDDKFDVQFQSPEFSS.

This is an uncharacterized protein from Treponema pallidum (strain Nichols).